The following is a 403-amino-acid chain: Tryptophan synthase beta chain (403 aa).

Lysine 93 bears the N6-(pyridoxal phosphate)lysine mark.

Belongs to the TrpB family. In terms of assembly, tetramer of two alpha and two beta chains. Pyridoxal 5'-phosphate serves as cofactor.

The catalysed reaction is (1S,2R)-1-C-(indol-3-yl)glycerol 3-phosphate + L-serine = D-glyceraldehyde 3-phosphate + L-tryptophan + H2O. It participates in amino-acid biosynthesis; L-tryptophan biosynthesis; L-tryptophan from chorismate: step 5/5. Functionally, the beta subunit is responsible for the synthesis of L-tryptophan from indole and L-serine. This Acinetobacter baylyi (strain ATCC 33305 / BD413 / ADP1) protein is Tryptophan synthase beta chain.